The sequence spans 364 residues: tRNA 2-selenouridine synthase (364 aa).

The 124-residue stretch at 14–137 folds into the Rhodanese domain; that stretch reads LIADTPIIDV…LRQTTIQATI (124 aa). Residue Cys-97 is the S-selanylcysteine intermediate of the active site.

This sequence belongs to the SelU family. In terms of assembly, monomer.

The catalysed reaction is 5-methylaminomethyl-2-thiouridine(34) in tRNA + selenophosphate + (2E)-geranyl diphosphate + H2O + H(+) = 5-methylaminomethyl-2-selenouridine(34) in tRNA + (2E)-thiogeraniol + phosphate + diphosphate. The enzyme catalyses 5-methylaminomethyl-2-thiouridine(34) in tRNA + (2E)-geranyl diphosphate = 5-methylaminomethyl-S-(2E)-geranyl-thiouridine(34) in tRNA + diphosphate. It catalyses the reaction 5-methylaminomethyl-S-(2E)-geranyl-thiouridine(34) in tRNA + selenophosphate + H(+) = 5-methylaminomethyl-2-(Se-phospho)selenouridine(34) in tRNA + (2E)-thiogeraniol. It carries out the reaction 5-methylaminomethyl-2-(Se-phospho)selenouridine(34) in tRNA + H2O = 5-methylaminomethyl-2-selenouridine(34) in tRNA + phosphate. In terms of biological role, involved in the post-transcriptional modification of the uridine at the wobble position (U34) of tRNA(Lys), tRNA(Glu) and tRNA(Gln). Catalyzes the conversion of 2-thiouridine (S2U-RNA) to 2-selenouridine (Se2U-RNA). Acts in a two-step process involving geranylation of 2-thiouridine (S2U) to S-geranyl-2-thiouridine (geS2U) and subsequent selenation of the latter derivative to 2-selenouridine (Se2U) in the tRNA chain. In Escherichia coli O8 (strain IAI1), this protein is tRNA 2-selenouridine synthase.